A 127-amino-acid chain; its full sequence is Large ribosomal subunit protein bL19 (127 aa).

It belongs to the bacterial ribosomal protein bL19 family.

Functionally, this protein is located at the 30S-50S ribosomal subunit interface and may play a role in the structure and function of the aminoacyl-tRNA binding site. The protein is Large ribosomal subunit protein bL19 of Bradyrhizobium sp. (strain BTAi1 / ATCC BAA-1182).